Reading from the N-terminus, the 172-residue chain is Monopolar attachment protein 1 (172 aa).

Residues 15–30 (KKNKNPKISNSKKKNS) are compositionally biased toward basic residues. Residues 15–43 (KKNKNPKISNSKKKNSTRPALQDKTNQTL) form a disordered region. Polar residues predominate over residues 31-43 (TRPALQDKTNQTL). Positions 100 to 102 (STP) match the POLO box domain (PBD)-binding motif.

Interacts with rec8, Interacts with plo1.

It is found in the nucleus. Its subcellular location is the chromosome. The protein resides in the centromere. It localises to the kinetochore. Functionally, plays an important role in chromosome segregation during meiosis I by allowing meiotic rec8 to establish cohesion at the centromeric central core and thereby promote the side-by-side structure of kinetochores at meiosis I. Enables monopolar attachment during meiosis I. Required to facilitate kinetochore mono-orientation during meiosis I, when kinetochores on sister chromosomes face the same direction and are thus captured and pulled by spindle fibers from the same pole. Acts in collaboration with plo1. The protein is Monopolar attachment protein 1 (moa1) of Schizosaccharomyces pombe (strain 972 / ATCC 24843) (Fission yeast).